Reading from the N-terminus, the 288-residue chain is Small ribosomal subunit biogenesis GTPase RsgA (288 aa).

Positions 61–218 (TNKLIRPPVS…IVDTPGFSSL (158 aa)) constitute a CP-type G domain. Residues 110–113 (NKID) and 161–169 (GPSGVGKST) contribute to the GTP site. Zn(2+)-binding residues include C242, C247, H249, and C255.

The protein belongs to the TRAFAC class YlqF/YawG GTPase family. RsgA subfamily. In terms of assembly, monomer. Associates with 30S ribosomal subunit, binds 16S rRNA. It depends on Zn(2+) as a cofactor.

It is found in the cytoplasm. In terms of biological role, one of several proteins that assist in the late maturation steps of the functional core of the 30S ribosomal subunit. Helps release RbfA from mature subunits. May play a role in the assembly of ribosomal proteins into the subunit. Circularly permuted GTPase that catalyzes slow GTP hydrolysis, GTPase activity is stimulated by the 30S ribosomal subunit. In Clostridium acetobutylicum (strain ATCC 824 / DSM 792 / JCM 1419 / IAM 19013 / LMG 5710 / NBRC 13948 / NRRL B-527 / VKM B-1787 / 2291 / W), this protein is Small ribosomal subunit biogenesis GTPase RsgA.